The primary structure comprises 428 residues: Adenylosuccinate synthetase (428 aa).

GTP-binding positions include 12-18 and 40-42; these read GDEGKGK and GHT. D13 functions as the Proton acceptor in the catalytic mechanism. Mg(2+) is bound by residues D13 and G40. Residues 13–16, 38–41, T130, R144, Q224, T239, and R303 contribute to the IMP site; these read DEGK and NAGH. Residue H41 is the Proton donor of the active site. A substrate-binding site is contributed by 299–305; sequence VTTGRSR. Residues R305, 331–333, and 413–415 contribute to the GTP site; these read KID and GVG.

The protein belongs to the adenylosuccinate synthetase family. In terms of assembly, homodimer. It depends on Mg(2+) as a cofactor.

Its subcellular location is the cytoplasm. The catalysed reaction is IMP + L-aspartate + GTP = N(6)-(1,2-dicarboxyethyl)-AMP + GDP + phosphate + 2 H(+). It functions in the pathway purine metabolism; AMP biosynthesis via de novo pathway; AMP from IMP: step 1/2. Plays an important role in the de novo pathway of purine nucleotide biosynthesis. Catalyzes the first committed step in the biosynthesis of AMP from IMP. In Clostridium perfringens (strain 13 / Type A), this protein is Adenylosuccinate synthetase.